The sequence spans 858 residues: RNA-directed RNA polymerase 2a (858 aa).

The region spanning 511-624 is the RdRp catalytic domain; sequence KYCLEIDLSK…FSVLPPVGDP (114 aa). The segment at 775 to 830 is disordered; sequence RKKKDGIERRRNDKRRTPTSPHGGGEETETKVSQEESTGTMLQKSQRESAFKSQTI. A compositionally biased stretch (basic and acidic residues) spans 798-808; it reads GGEETETKVSQ. Over residues 809-818 the composition is skewed to polar residues; it reads EESTGTMLQK.

Belongs to the ssRNA positive-strand viruses RNA-directed RNA polymerase family. In terms of assembly, interacts with replication protein 1a.

It catalyses the reaction RNA(n) + a ribonucleoside 5'-triphosphate = RNA(n+1) + diphosphate. In terms of biological role, RNA-dependent RNA polymerase which replicates the viral genome composed of 3 RNA segments, RNA1, RNA2 and RNA3. The chain is RNA-directed RNA polymerase 2a from Cucumber mosaic virus (strain Ixora) (CMV).